A 120-amino-acid chain; its full sequence is U13-lycotoxin-Ls1d (120 aa).

Residues 1–16 (MKILFVLISILYAVYC) form the signal peptide. Residues 17-54 (FSSEEDVDSAYLANELEPVEDINSEQYAALEPKEEQER) constitute a propeptide that is removed on maturation. Intrachain disulfides connect Cys56–Cys70, Cys63–Cys76, Cys69–Cys87, and Cys78–Cys85. The 40-residue stretch at 56–95 (CADMGQDCKDDCDCCLNIATCNCRFGRYFCSCTFGDYQTC) folds into the Agouti domain.

Belongs to the neurotoxin 05 (agouti) family. Post-translationally, contains 6 disulfide bonds. Expressed by the venom gland.

It is found in the secreted. This Lycosa singoriensis (Wolf spider) protein is U13-lycotoxin-Ls1d.